Here is a 601-residue protein sequence, read N- to C-terminus: Elongation factor 4 (601 aa).

In terms of domain architecture, tr-type G spans arginine 7–lysine 189. GTP-binding positions include aspartate 19–threonine 24 and asparagine 136–aspartate 139.

It belongs to the TRAFAC class translation factor GTPase superfamily. Classic translation factor GTPase family. LepA subfamily.

The protein localises to the cell inner membrane. The enzyme catalyses GTP + H2O = GDP + phosphate + H(+). Its function is as follows. Required for accurate and efficient protein synthesis under certain stress conditions. May act as a fidelity factor of the translation reaction, by catalyzing a one-codon backward translocation of tRNAs on improperly translocated ribosomes. Back-translocation proceeds from a post-translocation (POST) complex to a pre-translocation (PRE) complex, thus giving elongation factor G a second chance to translocate the tRNAs correctly. Binds to ribosomes in a GTP-dependent manner. This is Elongation factor 4 from Xanthomonas campestris pv. campestris (strain 8004).